Here is a 103-residue protein sequence, read N- to C-terminus: Small ribosomal subunit protein uS10 (103 aa).

This sequence belongs to the universal ribosomal protein uS10 family. In terms of assembly, part of the 30S ribosomal subunit.

Involved in the binding of tRNA to the ribosomes. In Natranaerobius thermophilus (strain ATCC BAA-1301 / DSM 18059 / JW/NM-WN-LF), this protein is Small ribosomal subunit protein uS10.